Reading from the N-terminus, the 407-residue chain is Aspartokinase (407 aa).

7–10 lines the ATP pocket; the sequence is KFGG. Residue 25-30 coordinates substrate; it reads RVIEEV. S41 contacts ATP. Substrate-binding positions include 47–49, E74, 125–126, 150–153, and S153; these read TDE, LD, and RGGS. Residues 173 to 174 and 179 to 184 each bind ATP; these read TD and FTTDPR. ACT domains follow at residues 264–338 and 340–407; these read VTVV…LAKV and IVGS…AVRS. Residues 289–291, Q295, 351–352, 365–366, and 372–373 each bind substrate; these read NVD, VA, EI, and SE.

It belongs to the aspartokinase family. As to quaternary structure, tetramer consisting of 2 isoforms Alpha (catalytic and regulation) and of a homodimer of 2 isoforms Beta (regulation).

It catalyses the reaction L-aspartate + ATP = 4-phospho-L-aspartate + ADP. Its pathway is amino-acid biosynthesis; L-lysine biosynthesis via DAP pathway; (S)-tetrahydrodipicolinate from L-aspartate: step 1/4. It participates in amino-acid biosynthesis; L-methionine biosynthesis via de novo pathway; L-homoserine from L-aspartate: step 1/3. The protein operates within amino-acid biosynthesis; L-threonine biosynthesis; L-threonine from L-aspartate: step 1/5. Lysine-sensitive. Its function is as follows. Catalyzes the phosphorylation of the beta-carboxyl group of aspartic acid with ATP to yield 4-phospho-L-aspartate, which is involved in the branched biosynthetic pathway leading to the biosynthesis of amino acids threonine, isoleucine and methionine. The chain is Aspartokinase (lysC) from Geobacillus stearothermophilus (Bacillus stearothermophilus).